The chain runs to 892 residues: MMPIKSIVTLDQLEDSEYLFRIVSTVLPHLCLDYKVCDQLKTTFVHPFDVFLNNSLGSVTKQDELQAAISKLGINYLIDTTSRELKLFNVTLNAGNIDIINTPINISSETNPIINTHSFYDLPPFTQHLLNIRLTDTEYRARFIGGYIKPDGSDSMDVLAEKKYPDLNFDNTYLFNILYKDVINAPIKEFKAKIVNGVLSRQDFDNLIGVRQYITAQDQPRFDNTYAIADAARHYGVNLNTLPLPNVDLTTMPTYKHLIMYEQYFVDDYDRVPIYYNGNRVIFDDEIINFCISMRYQSLIPRLVEFFPDIPVNNNIVLHTRDPQNAAVNVTVGLPNMQFVDINRNNKFFINFFNLLAKEQRSTAIKVTKSMFWDGMDYEEYKSKNLQDMMFINSTCYVFGLYNHNNTTYCSILSDIISAEKTPIRVCLLPRVVGGKTVTDLISETLKSISSMTIREFPKKDKSSIMHIGLSETGFMRFFQLLRLMADKPHETAIKEVVMAYVGIKLGDKGSPYYIRKESYQDFIYLLFASMGFKVTTRRSIMGSNNISIISIRPRVTKQYIVTTLMKTSCSKNEAEKLITSAFDLLNFMVSVSDFRDYQSYRQYRNYCPRYFYAGSPEGEETIICDSEPISILDRIDTRGIFSAYTINEMMDTDIFSPENKAFKNNLSRFIESGDITGEDIFCAMPYNILDRIITNAGTCTVSIGDMLDNITTQSDCNMTNEITDMINASLKNTISKDNNMLVSQALDSVANHSKQKIGDLRQSSCKMALLFKNLATSIYTIERIFNAKVGDDVKASMLEKYKVFTDISMSLYKDLIAMENLKAMLYIIRRSGCRIDDAQITTDDLVKSYSLIRPKILSMINYYNEMSRGYFEHMKKNLNMTDGDSVSFDDE.

A propeptide spanning residues 616-698 is cleaved from the precursor; the sequence is SPEGEETIIC…ILDRIITNAG (83 aa).

The protein belongs to the orthopxvirus protein OPG136 family. In terms of assembly, interacts with P39/A4. Post-translationally, the precursor is cleaved by OPG083 to give rise to the 62 kDa mature protein during virion maturation. Proteolytic cleavage of major core proteins OPG136, OPG129, and OPG098, which occurs at a late stage of core formation, is required for production of infectious mature virions (MV).

It localises to the virion. In terms of biological role, core protein 4a is the most abundant virion protein. Major component of the virion core that undergoes proteolytic processing during the immature virion (IV) to mature virion (MV) transition. The sequence is that of Major core protein OPG136 precursor (OPG136) from Homo sapiens (Human).